Reading from the N-terminus, the 141-residue chain is Hemoglobin subunit alpha (141 aa).

One can recognise a Globin domain in the interval 1–141; the sequence is VLSPADKSNV…VSTVLTSKYR (141 aa). Position 3 is a phosphoserine (serine 3). N6-succinyllysine occurs at positions 7 and 11. The residue at position 16 (lysine 16) is an N6-acetyllysine; alternate. Position 16 is an N6-succinyllysine; alternate (lysine 16). Residue tyrosine 24 is modified to Phosphotyrosine. A Phosphoserine modification is found at serine 35. Lysine 40 is subject to N6-succinyllysine. Position 49 is a phosphoserine (serine 49). Histidine 58 is an O2 binding site. Histidine 87 lines the heme b pocket. The residue at position 102 (serine 102) is a Phosphoserine. Phosphothreonine is present on threonine 108. Serine 124 and serine 131 each carry phosphoserine. Residues threonine 134 and threonine 137 each carry the phosphothreonine modification. Position 138 is a phosphoserine (serine 138).

The protein belongs to the globin family. Heterotetramer of two alpha chains and two beta chains. As to expression, red blood cells.

Its function is as follows. Involved in oxygen transport from the lung to the various peripheral tissues. In terms of biological role, hemopressin acts as an antagonist peptide of the cannabinoid receptor CNR1. Hemopressin-binding efficiently blocks cannabinoid receptor CNR1 and subsequent signaling. In Leontocebus fuscicollis (Brown-mantled tamarin), this protein is Hemoglobin subunit alpha (HBA).